The primary structure comprises 480 residues: Adenosylhomocysteinase (480 aa).

Substrate contacts are provided by Thr63, Asp142, and Glu203. 204–206 (TTT) is a binding site for NAD(+). Substrate contacts are provided by Lys233 and Asp237. Residues Asn238, 267 to 272 (GYGDVG), Glu290, Asn325, 346 to 348 (IGH), and Asn394 contribute to the NAD(+) site.

It belongs to the adenosylhomocysteinase family. It depends on NAD(+) as a cofactor.

The protein localises to the cytoplasm. The catalysed reaction is S-adenosyl-L-homocysteine + H2O = L-homocysteine + adenosine. Its pathway is amino-acid biosynthesis; L-homocysteine biosynthesis; L-homocysteine from S-adenosyl-L-homocysteine: step 1/1. Functionally, may play a key role in the regulation of the intracellular concentration of adenosylhomocysteine. This is Adenosylhomocysteinase from Xanthomonas euvesicatoria pv. vesicatoria (strain 85-10) (Xanthomonas campestris pv. vesicatoria).